A 134-amino-acid chain; its full sequence is UPF0102 protein Rmet_3430 (134 aa).

The protein belongs to the UPF0102 family.

This chain is UPF0102 protein Rmet_3430, found in Cupriavidus metallidurans (strain ATCC 43123 / DSM 2839 / NBRC 102507 / CH34) (Ralstonia metallidurans).